An 816-amino-acid chain; its full sequence is MMLLSSSYSGGQFPGVSPLGTRPKRSTTVVPLPVVTRATAGGVRNNLEVVGNAGTLQGMDIDELRVIVRKQLQGVELSPSSYDTAWVAMVPVQGSPQSPCFPQCVEWILQNQQEDGSWGHSAGPSGEVNKDILLSTLACVLALNTWNVGQDHIRRGLSFIGRNFSVAIDGQCAAPVGFNITFSGMLHLAIGMGLKFPVMETDIDSIFRLREVEFERDAGGTASARKAFMAYVSEGLGREQDWDHVMAYQRKNGSLFNSPSTTAASAIHSCNDRALDYLVSLTSKLGGPVPAIHPDKVYSQLCMVDTLEKMGISSDFACDIRDILDMTYSCWMQDEEEIMLDMATCAKAFRLLRMHGYDVSSEGMARFAERSSFDDSIHAYLNDTKPLLELYKSSQLHFLEEDLILENISSWSAKLLKQQLSSNKIMKSLMPEVEYALKYPLYSTVDALEHRGNIERFNVNGFQRPKSGYCGSGADKEILALAVDKFHYNQSVYQQELRYLESWVAEFGLDELKFARVIPLQSLLSALVPLFPAELSDARIAFSQNCMLTTMVDDFFDGGGSMEEMVNFVALIDEWDNHGEIGFCSNNVEIMFNAIYNTTKRNCAKAALVQNRCVMDHIAKQWQVMVRAMKTEAEWAASRHIPATMEEYMSVGEPSFALGPIVPLSAYLLGEELPEEAVRSPEYGQLLRHASAVGRLLNDVMTYEKEVLTWTPNSVLLQALAAARGGGESPTPPSPACAEAARGEVRRAIQASWRDLHRLVFRDDDGSSIVPRACRELFWGTAKVANVFYQEVDGYTPKAMRGMANAVILDPLHLQQ.

Positions 1-10 are enriched in polar residues; sequence MMLLSSSYSG. Positions 1 to 24 are disordered; the sequence is MMLLSSSYSGGQFPGVSPLGTRPK. Residues aspartate 553, aspartate 557, asparagine 698, threonine 702, and glutamate 706 each contribute to the Mg(2+) site. The DDXXD motif motif lies at 553–557; that stretch reads DDFFD.

The protein belongs to the terpene synthase family. Mg(2+) serves as cofactor.

It carries out the reaction 9alpha-copalyl diphosphate = stemod-13(17)-ene + diphosphate. Catalyzes the conversion of syn-copalyl diphosphate to stemodene. This Oryza sativa subsp. indica (Rice) protein is Stemod-13(17)-ene synthase (KSL11).